A 973-amino-acid chain; its full sequence is MARQYSRTNPLGFTPWPVTIITALVYLALVIPLLVVQHVVPSAPGSDPAGLNLTEAWADLQVLTNGFHPYNSHRNDDVHKWLLQRVHEIIDSAPARSTDSAHPPAVFVFDDDQSNLTFSGRGNELGVYFESTNILVYIRGTEDDETQWWADPQGQPASKGGVLVNAHYDSVSTGYGATDDGMGVVSCLQLLRYFTTPGHAPRRGLVVLLNNGEEDFLNGARVYSQHPLSRLPHTFVNLEGAGAGGRASLFRSSDTEVTRPYARAPHPFGSVLSANGFEAGLISSQTDYVVLEGDLGLRGLDIAFIEPRARYHTDQDDARHTSVDSLWHMLSAAVATTEGLVDDASDQFDGAPREDGKVASGSGSKAVWFDLFGSTLAVFELHTLFALSVTLLIVAPLVLLATSIALVRADRMYLFRSTARVPGSDDFDEGVSLQGVRGFFRFPFLLVIPTGVAVGLAYLVTKINPYIIHSSEYAVWSMMISAWVFLAWFVSRVADFARPSAFHRVYVLTWMFVAEWVLLVIATVYENRYGLAGGYFVFFALSGTFLATWISYLELFALPRKSEYARQIAPPSRYASNHGSRLGTSSGEHGMDDAEDEEDDDGDDEDEARNVEEEPTESTSLLRGRGQRTTFANYVRVTGDYLHGAGDDEPRETHVYGREQAWSAGLPKWTWVLQFLLSAPIVLILVGPLALLLTAALRQTAQDGSSPLFVYIAIAVLTTLLVTPLLPFIHRYTHHIPLFLLLVFTGTLIYNLVAFPFSPSNRLKLFFLQEVDLDTGVNRAFLSGAHPFVYEVARSLPSAAGQNVSCDLSAARPKCSWYGIPPQVQATATPDTADWVSFNITRSADQPTRARFSVAGQNTRACRLVFDDPVRSFAVLDSAYDPRFPHLSPQGTQEIRLWSREWGHTWTVDVEWTVPAVDGESRGVSGRVVCLWSDGNAPGVIPALDEVRRYSPVWTAVSKLSDGLVEGSRRFEV.

At 1 to 15 the chain is on the cytoplasmic side; that stretch reads MARQYSRTNPLGFTP. A helical membrane pass occupies residues 16–36; it reads WPVTIITALVYLALVIPLLVV. Topologically, residues 37–383 are vacuolar; it reads QHVVPSAPGS…STLAVFELHT (347 aa). N-linked (GlcNAc...) asparagine glycans are attached at residues Asn-52 and Asn-115. Residues His-167 and Asp-179 each contribute to the Zn(2+) site. Glu-213 acts as the Proton acceptor in catalysis. 3 residues coordinate Zn(2+): Glu-214, Glu-239, and His-312. The helical transmembrane segment at 384–404 threads the bilayer; sequence LFALSVTLLIVAPLVLLATSI. Over 405-438 the chain is Cytoplasmic; that stretch reads ALVRADRMYLFRSTARVPGSDDFDEGVSLQGVRG. Residues 439–459 traverse the membrane as a helical segment; it reads FFRFPFLLVIPTGVAVGLAYL. Topologically, residues 460 to 469 are vacuolar; sequence VTKINPYIIH. The helical transmembrane segment at 470 to 490 threads the bilayer; sequence SSEYAVWSMMISAWVFLAWFV. The Cytoplasmic segment spans residues 491 to 504; it reads SRVADFARPSAFHR. The helical transmembrane segment at 505 to 525 threads the bilayer; the sequence is VYVLTWMFVAEWVLLVIATVY. The Vacuolar segment spans residues 526 to 529; that stretch reads ENRY. Residues 530 to 550 traverse the membrane as a helical segment; the sequence is GLAGGYFVFFALSGTFLATWI. Residues 551-674 are Cytoplasmic-facing; sequence SYLELFALPR…GLPKWTWVLQ (124 aa). Positions 572 to 623 are disordered; that stretch reads SRYASNHGSRLGTSSGEHGMDDAEDEEDDDGDDEDEARNVEEEPTESTSLLR. The span at 574-587 shows a compositional bias: polar residues; sequence YASNHGSRLGTSSG. The segment covering 593–607 has biased composition (acidic residues); the sequence is DAEDEEDDDGDDEDE. The chain crosses the membrane as a helical span at residues 675–695; sequence FLLSAPIVLILVGPLALLLTA. Residues 696 to 708 lie on the Vacuolar side of the membrane; the sequence is ALRQTAQDGSSPL. The chain crosses the membrane as a helical span at residues 709-729; the sequence is FVYIAIAVLTTLLVTPLLPFI. Residues 730–735 lie on the Cytoplasmic side of the membrane; it reads HRYTHH. Residues 736-756 form a helical membrane-spanning segment; sequence IPLFLLLVFTGTLIYNLVAFP. Residues 757 to 973 are Vacuolar-facing; it reads FSPSNRLKLF…LVEGSRRFEV (217 aa). N-linked (GlcNAc...) asparagine glycosylation is found at Asn-803 and Asn-839.

The protein belongs to the peptidase M28 family. Zn(2+) is required as a cofactor.

The protein localises to the vacuole membrane. May be involved in vacuolar sorting and osmoregulation. In Aspergillus clavatus (strain ATCC 1007 / CBS 513.65 / DSM 816 / NCTC 3887 / NRRL 1 / QM 1276 / 107), this protein is Vacuolar membrane protease.